The primary structure comprises 187 residues: Frequenin-1 (187 aa).

A lipid anchor (N-myristoyl glycine) is attached at Gly-2. 4 consecutive EF-hand domains span residues 24–59, 60–95, 96–131, and 143–178; these read EKEI…FPQG, DPSK…TSKG, NLDE…IYQM, and TPQK…DPRI. Positions 73, 75, 77, 79, 84, 109, 111, 113, 115, 120, 156, 158, 160, 162, and 167 each coordinate Ca(2+).

The protein belongs to the recoverin family. In terms of assembly, in contrast to Frq2, does not interact with ric8a. Enriched in synapses, such as the motor nerve endings at neuromuscular junctions. In the embryo, highly expressed in the ventral ganglia.

The protein resides in the cytoplasm. Ca(2+)-dependent modulation of synaptic efficacy. Also plays a role in axon terminal morphology. In Drosophila melanogaster (Fruit fly), this protein is Frequenin-1 (Frq1).